The chain runs to 402 residues: MVPPVYIVSTARTPIGSFQGTLSSLTYSDLGAHAVKAALNKVPQIKPEDVDEIVFGGVLQANVGQAPARQVALKAGLTDKIVASTVNKVCASGLKAIIIGAQNIICGTSDIVVVGGAESMTNTPYYLPTARNGARFGDSTLIDGIQKDGLLDVYEQKLMGVAAEKCAADHGFTREQQDEFAIKSYQKAGNALKQGKFNQEIAPVTIKGVRGKPDVVVEKDEEIEKFNEAKLKSARAVFQKENGTVTGPNASKINDGAAALILVSEAKLKELGLKPLAKINGWGEAARNPIDFTIAPALAVPKAVKHAGLTLDQVDFFELNEAFSVVGLANAEICQIPLEKLNAYGGAVALGHPLGCSGARIVVTLLSVLIQEGGKIGCAGVCNGGGGASSIVIEKVDSDFKL.

The Acyl-thioester intermediate role is filled by Cys90. 2 residues coordinate CoA: Tyr185 and Lys230. Tyr185 provides a ligand contact to K(+). K(+) is bound at residue Ala250. Residue Ser251 coordinates CoA. Residue Val348 coordinates K(+). Residues His352 and Cys382 each act as proton acceptor in the active site.

Belongs to the thiolase-like superfamily. Thiolase family. As to quaternary structure, homotetramer.

It localises to the cytoplasm. Its subcellular location is the cytosol. The enzyme catalyses 2 acetyl-CoA = acetoacetyl-CoA + CoA. It functions in the pathway metabolic intermediate biosynthesis; (R)-mevalonate biosynthesis; (R)-mevalonate from acetyl-CoA: step 1/3. In terms of biological role, acetyl-CoA acetyltransferase; part of the first module of ergosterol biosynthesis pathway that includes the early steps of the pathway, conserved across all eukaryotes, and which results in the formation of mevalonate from acetyl-coenzyme A (acetyl-CoA). ERG10 catalyzes the formation of acetoacetyl-CoA from acetyl-CoA. The first module starts with the action of the cytosolic acetyl-CoA acetyltransferase ERG10 that catalyzes the formation of acetoacetyl-CoA. The hydroxymethylglutaryl-CoA synthase ERG13 then condenses acetyl-CoA with acetoacetyl-CoA to form HMG-CoA. The 3-hydroxy-3-methylglutaryl-coenzyme A (HMG-CoA) reductase HMG1 finally reduces HMG-CoA to produce mevalonate. This Candida albicans (strain SC5314 / ATCC MYA-2876) (Yeast) protein is Acetyl-CoA acetyltransferase.